The primary structure comprises 525 residues: GMP synthase [glutamine-hydrolyzing] (525 aa).

The Glutamine amidotransferase type-1 domain occupies 3–200 (KILILDFGSQ…VLHVAGCKPS (198 aa)). The active-site Nucleophile is the C79. Catalysis depends on residues H174 and E176. The region spanning 201 to 393 (WTMPNYIDEA…LGLPHDMVYR (193 aa)) is the GMPS ATP-PPase domain. ATP is bound at residue 228–234 (SGGVDSS).

In terms of assembly, homodimer.

It carries out the reaction XMP + L-glutamine + ATP + H2O = GMP + L-glutamate + AMP + diphosphate + 2 H(+). Its pathway is purine metabolism; GMP biosynthesis; GMP from XMP (L-Gln route): step 1/1. Its function is as follows. Catalyzes the synthesis of GMP from XMP. This chain is GMP synthase [glutamine-hydrolyzing], found in Chromobacterium violaceum (strain ATCC 12472 / DSM 30191 / JCM 1249 / CCUG 213 / NBRC 12614 / NCIMB 9131 / NCTC 9757 / MK).